Consider the following 37-residue polypeptide: Mu-thomitoxin-Hme1a (37 aa).

Cystine bridges form between cysteine 2–cysteine 18, cysteine 9–cysteine 22, and cysteine 17–cysteine 33. Phenylalanine 37 is subject to Phenylalanine amide.

It belongs to the neurotoxin 01 (U2-agtx) family. Contains 3 disulfide bonds. Expressed by the venom gland.

It is found in the secreted. Its function is as follows. Blocks the Nav1.2/SCN2A, Nav1.4/SCN4A, and Nav1.6/SCN8A sodium channels. Reduces the peak amplitude of the sodium current and negatively shifts the steady-state inactivation process. Does not shift the threshold potential of activation or the voltage corresponding to maximal current. Does not change the reversal potential of the sodium current. May act on site 1 of the receptor. The polypeptide is Mu-thomitoxin-Hme1a (Heriaeus mellotteei (Crab spider)).